We begin with the raw amino-acid sequence, 122 residues long: Large ribosomal subunit protein uL14 (122 aa).

It belongs to the universal ribosomal protein uL14 family. In terms of assembly, part of the 50S ribosomal subunit. Forms a cluster with proteins L3 and L19. In the 70S ribosome, L14 and L19 interact and together make contacts with the 16S rRNA in bridges B5 and B8.

Binds to 23S rRNA. Forms part of two intersubunit bridges in the 70S ribosome. This chain is Large ribosomal subunit protein uL14, found in Symbiobacterium thermophilum (strain DSM 24528 / JCM 14929 / IAM 14863 / T).